Here is a 346-residue protein sequence, read N- to C-terminus: N-acetyl-gamma-glutamyl-phosphate reductase (346 aa).

Cysteine 151 is a catalytic residue.

Belongs to the NAGSA dehydrogenase family. Type 1 subfamily.

It localises to the cytoplasm. The catalysed reaction is N-acetyl-L-glutamate 5-semialdehyde + phosphate + NADP(+) = N-acetyl-L-glutamyl 5-phosphate + NADPH + H(+). It functions in the pathway amino-acid biosynthesis; L-arginine biosynthesis; N(2)-acetyl-L-ornithine from L-glutamate: step 3/4. Catalyzes the NADPH-dependent reduction of N-acetyl-5-glutamyl phosphate to yield N-acetyl-L-glutamate 5-semialdehyde. The sequence is that of N-acetyl-gamma-glutamyl-phosphate reductase from Ehrlichia canis (strain Jake).